The chain runs to 278 residues: tRNA pseudouridine synthase A (278 aa).

Residue Asp61 is the Nucleophile of the active site. Tyr119 lines the substrate pocket.

It belongs to the tRNA pseudouridine synthase TruA family. Homodimer.

It catalyses the reaction uridine(38/39/40) in tRNA = pseudouridine(38/39/40) in tRNA. Formation of pseudouridine at positions 38, 39 and 40 in the anticodon stem and loop of transfer RNAs. The protein is tRNA pseudouridine synthase A of Oleidesulfovibrio alaskensis (strain ATCC BAA-1058 / DSM 17464 / G20) (Desulfovibrio alaskensis).